Consider the following 363-residue polypeptide: Uroporphyrinogen decarboxylase (363 aa).

Substrate contacts are provided by residues 27 to 31 (RQAGR), Asp77, Tyr157, Thr212, and His333.

Belongs to the uroporphyrinogen decarboxylase family. Homodimer.

The protein localises to the cytoplasm. It catalyses the reaction uroporphyrinogen III + 4 H(+) = coproporphyrinogen III + 4 CO2. It functions in the pathway porphyrin-containing compound metabolism; protoporphyrin-IX biosynthesis; coproporphyrinogen-III from 5-aminolevulinate: step 4/4. Catalyzes the decarboxylation of four acetate groups of uroporphyrinogen-III to yield coproporphyrinogen-III. The protein is Uroporphyrinogen decarboxylase of Cupriavidus necator (strain ATCC 17699 / DSM 428 / KCTC 22496 / NCIMB 10442 / H16 / Stanier 337) (Ralstonia eutropha).